The primary structure comprises 726 residues: Methionine--tRNA ligase (726 aa).

A 'HIGH' region motif is present at residues 12–22 (PYVNNIPHLGN). Zn(2+) contacts are provided by C143, C146, C155, and C158. The short motif at 330–334 (KFSKS) is the 'KMSKS' region element. K333 is an ATP binding site. One can recognise a tRNA-binding domain in the interval 562–667 (FSEQICLKTV…DNPIPGERVI (106 aa)).

It belongs to the class-I aminoacyl-tRNA synthetase family. MetG type 1 subfamily. In terms of assembly, homodimer. Zn(2+) is required as a cofactor.

The protein localises to the cytoplasm. The enzyme catalyses tRNA(Met) + L-methionine + ATP = L-methionyl-tRNA(Met) + AMP + diphosphate. Its function is as follows. Is required not only for elongation of protein synthesis but also for the initiation of all mRNA translation through initiator tRNA(fMet) aminoacylation. The chain is Methionine--tRNA ligase from Borrelia duttonii (strain Ly).